The chain runs to 217 residues: ATP-dependent Clp protease proteolytic subunit (217 aa).

Residue Ser121 is the Nucleophile of the active site. His146 is an active-site residue.

The protein belongs to the peptidase S14 family. Fourteen ClpP subunits assemble into 2 heptameric rings which stack back to back to give a disk-like structure with a central cavity, resembling the structure of eukaryotic proteasomes.

Its subcellular location is the cytoplasm. The catalysed reaction is Hydrolysis of proteins to small peptides in the presence of ATP and magnesium. alpha-casein is the usual test substrate. In the absence of ATP, only oligopeptides shorter than five residues are hydrolyzed (such as succinyl-Leu-Tyr-|-NHMec, and Leu-Tyr-Leu-|-Tyr-Trp, in which cleavage of the -Tyr-|-Leu- and -Tyr-|-Trp bonds also occurs).. Cleaves peptides in various proteins in a process that requires ATP hydrolysis. Has a chymotrypsin-like activity. Plays a major role in the degradation of misfolded proteins. This is ATP-dependent Clp protease proteolytic subunit from Burkholderia vietnamiensis (strain G4 / LMG 22486) (Burkholderia cepacia (strain R1808)).